A 283-amino-acid polypeptide reads, in one-letter code: Phosphate import ATP-binding protein PstB (283 aa).

The span at 1 to 20 shows a compositional bias: polar residues; it reads MAQTLAQTKQISQSHTFDVS. A disordered region spans residues 1–33; the sequence is MAQTLAQTKQISQSHTFDVSQSHHKTPNDTNSH. Residues 37-278 enclose the ABC transporter domain; it reads YSTQNLDLWY…PSNKKTEDYI (242 aa). 69–76 serves as a coordination point for ATP; the sequence is GPSGCGKS.

It belongs to the ABC transporter superfamily. Phosphate importer (TC 3.A.1.7) family. As to quaternary structure, the complex is composed of two ATP-binding proteins (PstB), two transmembrane proteins (PstC and PstA) and a solute-binding protein (PstS).

It localises to the cell membrane. The enzyme catalyses phosphate(out) + ATP + H2O = ADP + 2 phosphate(in) + H(+). Part of the ABC transporter complex PstSACB involved in phosphate import. Responsible for energy coupling to the transport system. The polypeptide is Phosphate import ATP-binding protein PstB (Staphylococcus aureus (strain bovine RF122 / ET3-1)).